The sequence spans 668 residues: tRNA 5-methylaminomethyl-2-thiouridine biosynthesis bifunctional protein MnmC (668 aa).

The segment at 1–245 is tRNA (mnm(5)s(2)U34)-methyltransferase; it reads MKHYSIQPAN…KREMLCGVME (245 aa). The segment at 270–668 is FAD-dependent cmnm(5)s(2)U34 oxidoreductase; sequence IGGGIACALL…LLKGKAVKAG (399 aa).

In the N-terminal section; belongs to the methyltransferase superfamily. tRNA (mnm(5)s(2)U34)-methyltransferase family. It in the C-terminal section; belongs to the DAO family. It depends on FAD as a cofactor.

Its subcellular location is the cytoplasm. The enzyme catalyses 5-aminomethyl-2-thiouridine(34) in tRNA + S-adenosyl-L-methionine = 5-methylaminomethyl-2-thiouridine(34) in tRNA + S-adenosyl-L-homocysteine + H(+). Functionally, catalyzes the last two steps in the biosynthesis of 5-methylaminomethyl-2-thiouridine (mnm(5)s(2)U) at the wobble position (U34) in tRNA. Catalyzes the FAD-dependent demodification of cmnm(5)s(2)U34 to nm(5)s(2)U34, followed by the transfer of a methyl group from S-adenosyl-L-methionine to nm(5)s(2)U34, to form mnm(5)s(2)U34. This Shigella boydii serotype 18 (strain CDC 3083-94 / BS512) protein is tRNA 5-methylaminomethyl-2-thiouridine biosynthesis bifunctional protein MnmC.